We begin with the raw amino-acid sequence, 861 residues long: Leucine--tRNA ligase (861 aa).

Positions 42–52 (PYPSGRLHMGH) match the 'HIGH' region motif. The short motif at 619 to 623 (KMSKS) is the 'KMSKS' region element. Residue K622 coordinates ATP.

Belongs to the class-I aminoacyl-tRNA synthetase family.

It is found in the cytoplasm. It carries out the reaction tRNA(Leu) + L-leucine + ATP = L-leucyl-tRNA(Leu) + AMP + diphosphate. In Haemophilus influenzae (strain ATCC 51907 / DSM 11121 / KW20 / Rd), this protein is Leucine--tRNA ligase.